Here is a 303-residue protein sequence, read N- to C-terminus: Probable cell division protein WhiA (303 aa).

A DNA-binding region (H-T-H motif) is located at residues 272 to 303 (SIQQLADSLSTPLTKSGVNHRLRKINKIADEL).

This sequence belongs to the WhiA family.

Its function is as follows. Involved in cell division and chromosome segregation. The protein is Probable cell division protein WhiA of Streptococcus pneumoniae (strain Hungary19A-6).